A 438-amino-acid polypeptide reads, in one-letter code: Dol-P-Man:Man(5)GlcNAc(2)-PP-Dol alpha-1,3-mannosyltransferase (438 aa).

Serine 13 is subject to Phosphoserine. The next 11 helical transmembrane spans lie at 41–61 (YTLLVAACLCLAEVGITFWVI), 95–115 (TGPLVYPAGFVYIFMGLYYAT), 123–143 (MAQNIFAVLYLATLLLVFLIY), 149–169 (VPPFVFFFMCCASYRVHSIFV), 172–192 (LFNDPVAMVLLFLSINLLLAQ), 203–223 (LAVSVKMNVLLFAPGLLFLLL), 231–251 (ALPKLGICAGLQVVLGLPFLL), 289–309 (FHLALLTAHLTLLLLFALCRW), 332–352 (PLTPNQIVSTLFTSNFIGICF), 356–376 (LHYQFYVWYFHTLPYLLWAMP), and 407–427 (AALHICHAVILLQLWLGPQPF).

Belongs to the glycosyltransferase ALG3 family.

It is found in the endoplasmic reticulum membrane. The enzyme catalyses an alpha-D-Man-(1-&gt;2)-alpha-D-Man-(1-&gt;2)-alpha-D-Man-(1-&gt;3)-[alpha-D-Man-(1-&gt;6)]-beta-D-Man-(1-&gt;4)-beta-D-GlcNAc-(1-&gt;4)-alpha-D-GlcNAc-diphospho-di-trans,poly-cis-dolichol + a di-trans,poly-cis-dolichyl beta-D-mannosyl phosphate = an alpha-D-Man-(1-&gt;2)-alpha-D-Man-(1-&gt;2)-alpha-D-Man-(1-&gt;3)-[alpha-D-Man-(1-&gt;3)-alpha-D-Man-(1-&gt;6)]-beta-D-Man-(1-&gt;4)-beta-D-GlcNAc-(1-&gt;4)-alpha-D-GlcNAc-diphospho-di-trans,poly-cis-dolichol + a di-trans,poly-cis-dolichyl phosphate + H(+). It participates in protein modification; protein glycosylation. Functionally, dol-P-Man:Man(5)GlcNAc(2)-PP-Dol alpha-1,3-mannosyltransferase that operates in the biosynthetic pathway of dolichol-linked oligosaccharides, the glycan precursors employed in protein asparagine (N)-glycosylation. The assembly of dolichol-linked oligosaccharides begins on the cytosolic side of the endoplasmic reticulum membrane and finishes in its lumen. The sequential addition of sugars to dolichol pyrophosphate produces dolichol-linked oligosaccharides containing fourteen sugars, including two GlcNAcs, nine mannoses and three glucoses. Once assembled, the oligosaccharide is transferred from the lipid to nascent proteins by oligosaccharyltransferases. In the lumen of the endoplasmic reticulum, adds the first dolichyl beta-D-mannosyl phosphate derived mannose in an alpha-1,3 linkage to Man(5)GlcNAc(2)-PP-dolichol to produce Man(6)GlcNAc(2)-PP-dolichol. Man(6)GlcNAc(2)-PP-dolichol is a substrate for ALG9, the following enzyme in the biosynthetic pathway. This chain is Dol-P-Man:Man(5)GlcNAc(2)-PP-Dol alpha-1,3-mannosyltransferase, found in Homo sapiens (Human).